The sequence spans 465 residues: UDP-glucose:undecaprenyl-phosphate glucose-1-phosphate transferase (465 aa).

5 helical membrane passes run Phe23 to Phe43, Leu46 to Thr66, Ile82 to Phe102, Phe105 to Val125, and Ile280 to Ala300.

This sequence belongs to the bacterial sugar transferase family.

Its subcellular location is the cell inner membrane. It carries out the reaction di-trans,octa-cis-undecaprenyl phosphate + UDP-alpha-D-glucose = alpha-D-glucosyl di-trans,octa-cis-undecaprenyl diphosphate + UMP. Its pathway is capsule biogenesis; capsule polysaccharide biosynthesis. Its function is as follows. Is likely the initiating enzyme for the K2 capsular polysaccharide synthesis. Catalyzes the transfer of the glucose-1-phosphate moiety from UDP-Glc onto the carrier lipid undecaprenyl phosphate (C55-P), forming a phosphoanhydride bond yielding to glucosyl-pyrophosphoryl-undecaprenol (Glc-PP-C55). The chain is UDP-glucose:undecaprenyl-phosphate glucose-1-phosphate transferase from Klebsiella pneumoniae.